The following is a 626-amino-acid chain: Serine/threonine-protein kinase PknB (626 aa).

The Cytoplasmic portion of the chain corresponds to 1-332 (MTTPSHLSDR…DRSIGSVGRW (332 aa)). The 264-residue stretch at 11-274 (YELGEILGFG…TAAEMRADLV (264 aa)) folds into the Protein kinase domain. ATP contacts are provided by residues 17–25 (LGFGGMSEV), Lys40, and 93–95 (EYV). The active-site Proton acceptor is Asp138. ATP-binding positions include 140-143 (KPAN) and Asp156. Mg(2+)-binding residues include Asn143 and Asp156. Phosphoserine; by autocatalysis is present on residues Ser166 and Ser169. Thr171, Thr173, and Thr294 each carry phosphothreonine; by autocatalysis. The residue at position 295 (Ser295) is a Phosphoserine; by autocatalysis. The tract at residues 299–323 (SAAGNLSGPRTDPLPRQDLDDTDRD) is disordered. Thr309 is modified (phosphothreonine; by autocatalysis). A compositionally biased stretch (basic and acidic residues) spans 311 to 323 (PLPRQDLDDTDRD). The chain crosses the membrane as a helical span at residues 333–353 (VAVVAVLAVLTVVVTIAINTF). Residues 354–626 (GGITRDVQVP…DGIITLRFGQ (273 aa)) lie on the Extracellular side of the membrane. PASTA domains lie at 356 to 422 (ITRD…NVST), 423 to 490 (GPEQ…IVGS), 491 to 557 (GPAT…QVSK), and 558 to 626 (GNQF…RFGQ).

This sequence belongs to the protein kinase superfamily. Ser/Thr protein kinase family. As to quaternary structure, homodimer. In terms of processing, autophosphorylated. Dephosphorylated by PstP.

It is found in the cell membrane. It carries out the reaction L-seryl-[protein] + ATP = O-phospho-L-seryl-[protein] + ADP + H(+). It catalyses the reaction L-threonyl-[protein] + ATP = O-phospho-L-threonyl-[protein] + ADP + H(+). Functionally, protein kinase that regulates many aspects of mycobacterial physiology. Is a key component of a signal transduction pathway that regulates cell growth, cell shape and cell division via phosphorylation of target proteins. The polypeptide is Serine/threonine-protein kinase PknB (pknB) (Mycobacterium bovis (strain ATCC BAA-935 / AF2122/97)).